We begin with the raw amino-acid sequence, 802 residues long: Fibroblast growth factor receptor 4 (802 aa).

An N-terminal signal peptide occupies residues 1-21; it reads MRLLLALLGVLLSVPGPPVLS. One can recognise an Ig-like C2-type 1 domain in the interval 22–118; the sequence is LEASEEVELE…VLQNLTLITG (97 aa). The Extracellular portion of the chain corresponds to 22–369; sequence LEASEEVELE…AAAPEARYTD (348 aa). Cys57 and Cys101 form a disulfide bridge. An N-linked (GlcNAc...) asparagine glycan is attached at Asn112. Positions 119–148 are disordered; sequence DSLTSSNDDEDPKSHRDPSNRHSYPQQAPY. 2 Ig-like C2-type domains span residues 152–240 and 249–349; these read PQRM…YLLD and PILQ…AWLT. Cys172 and Cys224 form a disulfide bridge. Residues Asn258, Asn290, Asn311, and Asn322 are each glycosylated (N-linked (GlcNAc...) asparagine). A disulfide bond links Cys271 and Cys333. A helical membrane pass occupies residues 370–390; it reads IILYASGSLALAVLLLLAGLY. Position 390 is a phosphotyrosine; in variant R-388 (Tyr390). The Cytoplasmic portion of the chain corresponds to 391-802; the sequence is RGQALHGRHP…SFPFGSGVQT (412 aa). One can recognise a Protein kinase domain in the interval 467 to 755; the sequence is LVLGKPLGEG…VLLAVSEEYL (289 aa). ATP-binding positions include 473–481 and Lys503; that span reads LGEGCFGQV. Ser573 carries the phosphoserine modification. Asp612 serves as the catalytic Proton acceptor. A phosphotyrosine; by autocatalysis mark is found at Tyr642, Tyr643, and Tyr754.

Belongs to the protein kinase superfamily. Tyr protein kinase family. Fibroblast growth factor receptor subfamily. In terms of assembly, monomer. Homodimer after ligand binding. Interacts with FGF1, FGF2, FGF4, FGF6, FGF8, FGF9, FGF16, FGF17, FGF18, FGF19, FGF21 and FGF23 (in vitro). Binding affinity for FGF family members is enhanced by interactions between FGFs and heparan sulfate proteoglycans. Interacts with KLB; this strongly increases the affinity for FGF19 and FGF23. Affinity for FGF19 is strongly increased by KLB and sulfated glycosaminoglycans. KLB and KL both interact with the core-glycosylated FGFR4 in the endoplasmic reticulum and promote its degradation, so that only FGFR4 with fully mature N-glycans is expressed at the cell surface. Identified in a complex with NCAM1, CDH2, PLCG1, FRS2, SRC, SHC1, GAP43 and CTTN. Interacts with MMP14 and HIP1. Interacts with STAT3. In terms of processing, N-glycosylated. Full maturation of the glycan chains in the Golgi is essential for high affinity interaction with FGF19. Ubiquitinated. Subject to proteasomal degradation when not fully glycosylated. Post-translationally, autophosphorylated. Binding of FGF family members together with heparan sulfate proteoglycan or heparin promotes receptor dimerization and autophosphorylation on tyrosine residues. Autophosphorylation occurs in trans between the two FGFR molecules present in the dimer. In terms of tissue distribution, expressed in gastrointestinal epithelial cells, pancreas, and gastric and pancreatic cancer cell lines.

It localises to the cell membrane. The protein resides in the endosome. Its subcellular location is the endoplasmic reticulum. The protein localises to the secreted. The catalysed reaction is L-tyrosyl-[protein] + ATP = O-phospho-L-tyrosyl-[protein] + ADP + H(+). Its activity is regulated as follows. Present in an inactive conformation in the absence of bound ligand. Ligand binding leads to dimerization and activation by autophosphorylation on tyrosine residues. In terms of biological role, tyrosine-protein kinase that acts as a cell-surface receptor for fibroblast growth factors and plays a role in the regulation of cell proliferation, differentiation and migration, and in regulation of lipid metabolism, bile acid biosynthesis, glucose uptake, vitamin D metabolism and phosphate homeostasis. Required for normal down-regulation of the expression of CYP7A1, the rate-limiting enzyme in bile acid synthesis, in response to FGF19. Phosphorylates PLCG1 and FRS2. Ligand binding leads to the activation of several signaling cascades. Activation of PLCG1 leads to the production of the cellular signaling molecules diacylglycerol and inositol 1,4,5-trisphosphate. Phosphorylation of FRS2 triggers recruitment of GRB2, GAB1, PIK3R1 and SOS1, and mediates activation of RAS, MAPK1/ERK2, MAPK3/ERK1 and the MAP kinase signaling pathway, as well as of the AKT1 signaling pathway. Promotes SRC-dependent phosphorylation of the matrix protease MMP14 and its lysosomal degradation. FGFR4 signaling is down-regulated by receptor internalization and degradation; MMP14 promotes internalization and degradation of FGFR4. Mutations that lead to constitutive kinase activation or impair normal FGFR4 inactivation lead to aberrant signaling. The sequence is that of Fibroblast growth factor receptor 4 (FGFR4) from Homo sapiens (Human).